Reading from the N-terminus, the 504-residue chain is Tachykinin-like peptides receptor 86C (504 aa).

The Extracellular segment spans residues 1–84 (MSEIVDTELL…PYELPWEQKT (84 aa)). N-linked (GlcNAc...) asparagine glycosylation is found at asparagine 12, asparagine 28, and asparagine 36. The chain crosses the membrane as a helical span at residues 85–108 (IWAIIFGLMMFVAIAGNGIVLWIV). Residues 109-118 (TGHRSMRTVT) lie on the Cytoplasmic side of the membrane. Residues 119-143 (NYFLLNLSIADLLMSSLNCVFNFIF) traverse the membrane as a helical segment. At 144–155 (MLNSDWPFGSIY) the chain is on the extracellular side. A helical transmembrane segment spans residues 156 to 179 (CTINNFVANVTVSTSVFTLVAISF). The Cytoplasmic portion of the chain corresponds to 180–199 (DRYIAIVHPLKRRTSRRKVR). A helical transmembrane segment spans residues 200 to 224 (IILVLIWALSCVLSAPCLLYSSIMT). Residues 225 to 250 (KHYYNGKSRTVCFMMWPDGRYPTSMA) lie on the Extracellular side of the membrane. The helical transmembrane segment at 251–275 (DYAYNLIILVLTYGIPMIVMLICYS) threads the bilayer. Residues 276–308 (LMGRVLWGSRSIGENTDRQMESMKSKRKVVRMF) lie on the Cytoplasmic side of the membrane. The helical transmembrane segment at 309-330 (IAIVSIFAICWLPYHLFFIYAY) threads the bilayer. Topologically, residues 331–343 (HNNQVASTKYVQH) are extracellular. A helical membrane pass occupies residues 344–367 (MYLGFYWLAMSNAMVNPLIYYWMN). Over 368–504 (KRFRMYFQRI…NPVELSPKQM (137 aa)) the chain is Cytoplasmic. The interval 393 to 450 (PKSRLTNKNSSNRHTRAETKSQWKRSTMETQIQQAPVTSSCREQRSAQQQQPPGSGTN) is disordered. Polar residues-rich tracts occupy residues 395–404 (SRLTNKNSSN) and 416–450 (KRSTMETQIQQAPVTSSCREQRSAQQQQPPGSGTN).

This sequence belongs to the G-protein coupled receptor 1 family. Expressed in central nervous system, as well as in subsets of neurons in each segment of the developing ventral ganglia.

It localises to the cell membrane. In terms of biological role, receptor for tachykinin-like peptides. This chain is Tachykinin-like peptides receptor 86C (TkR86C), found in Drosophila melanogaster (Fruit fly).